A 304-amino-acid chain; its full sequence is Secreted mono- and diacylglycerol lipase MDL4 (304 aa).

The first 19 residues, 1-19, serve as a signal peptide directing secretion; it reads MRFGGVVSLVLGFIVSVLA. A disulfide bridge links Cys-55 with Cys-297. N-linked (GlcNAc...) asparagine glycosylation is found at Asn-102 and Asn-161. Catalysis depends on Ser-171, which acts as the Nucleophile. Asp-228 is an active-site residue. Asn-253 carries an N-linked (GlcNAc...) asparagine glycan. His-281 is a catalytic residue.

The protein belongs to the AB hydrolase superfamily. Lipase family. Class 3 subfamily.

Its subcellular location is the secreted. It localises to the cell wall. It carries out the reaction a monoacylglycerol + H2O = glycerol + a fatty acid + H(+). The catalysed reaction is a diacylglycerol + H2O = a monoacylglycerol + a fatty acid + H(+). In terms of biological role, secreted lipase involved in Dandruff and seborrheic dermatitis (D/SD) probably via lipase-mediated breakdown of sebaceous lipids and release of irritating free fatty acids. Shows activity against monoglyceride and diglyceride substrates, but not triglyceride substrates and does not exhibit regio-selective production of diacylglycerols. Cleaves oleic acid from 1,2 isomers of diolein on both the 1 and the 2 position of the glycerol backbone, resulting mainly in free fatty acids but no monoolein is detected. Shows activity on monoolein and liberates mostly free fatty acids, but can also perform the reverse reaction and produce diolein. The chain is Secreted mono- and diacylglycerol lipase MDL4 from Malassezia globosa (strain ATCC MYA-4612 / CBS 7966) (Dandruff-associated fungus).